Reading from the N-terminus, the 454-residue chain is uncharacterized protein (454 aa).

In terms of domain architecture, HNH spans 364 to 405 (CSRPGCDAPAYHSEVHHVTPWTTTHRTDINDLTLACGPDNRL).

Belongs to the Rv1128c/1148c/1588c/1702c/1945/3466 family.

This is an uncharacterized protein from Mycobacterium tuberculosis (strain CDC 1551 / Oshkosh).